The chain runs to 385 residues: Probable di-N-acetylchitobiase 2 (385 aa).

A signal peptide spans 1 to 15; it reads MRIILLLFLIVFVVA. The GH18 domain occupies 16 to 377; that stretch reads QSSSSSSSSG…DALASFFPQS (362 aa). Residues Asn51 and Asn101 are each glycosylated (N-linked (GlcNAc...) asparagine). The Proton donor role is filled by Glu129. Asn223, Asn272, and Asn296 each carry an N-linked (GlcNAc...) asparagine glycan.

The protein belongs to the glycosyl hydrolase 18 family.

It is found in the lysosome. Functionally, involved in the degradation of asparagine-linked glycoproteins. May hydrolyze of N-acetyl-beta-D-glucosamine (1-4)N-acetylglucosamine chitobiose core from the reducing end of the bond. This Dictyostelium discoideum (Social amoeba) protein is Probable di-N-acetylchitobiase 2 (ctbs2).